We begin with the raw amino-acid sequence, 684 residues long: Pre-mRNA-splicing factor CLF1 (684 aa).

HAT repeat units lie at residues 43-75 (DWQRRKRTEYETVLKRNRLDLRQWMRYAQFEFD), 77-109 (KDIRRARSIYERALLVDHGFIPLWIQYIDSEIK), 111-143 (KNINHARNLLDRATNALPRVDKLWFKYLLLEES), 145-176 (GNQGIVRGIYTRWCSFEPGPDAWDSFIEFETR), 178-209 (LNFENVRNIYSKFVLVHPQIDTWLKWVRFEQT), 211-251 (GDIS…WEAS), 253-285 (GEYERSRTLYRLAVERWPISEALKEQQIQFEKK), 295-327 (IVIAKRKAEYEQYLKSDPYHYSTWWVYIDLVEE), 332-364 (QLTSAFQSFIELAKPKSLVKDSSWKRYIRICVR), 374-410 (NDLPTIRSVYQDILDIIPHKKFTFGKLWIMYAEFEIR), 412-443 (NNLLKARKILGVSLGKSPKPKVFKYYINLEIR), 445-477 (KEFDRVRKLYEKYIDFNPSSVQSWLDYAELEEN), 518-550 (AEYEKARELYEKYLILSRYDVNIWINQALFEST), and 584-622 (ENKHHTRAIFEKAISYFKEHNEDKKRQQVLQSLLEYEKV).

The protein belongs to the crooked-neck family. In terms of assembly, associated with the spliceosome.

The protein resides in the nucleus. Involved in pre-mRNA splicing and cell cycle progression. Required for the spliceosome assembly and initiation of the DNA replication. This Kluyveromyces lactis (strain ATCC 8585 / CBS 2359 / DSM 70799 / NBRC 1267 / NRRL Y-1140 / WM37) (Yeast) protein is Pre-mRNA-splicing factor CLF1 (CLF1).